A 1067-amino-acid chain; its full sequence is UPF0507 protein KLLA0D01133g (1067 aa).

The region spanning 280-432 (IVEDQELEHR…FHQDTVDSLT (153 aa)) is the VPS9 domain.

The protein belongs to the UPF0507 family.

This is UPF0507 protein KLLA0D01133g from Kluyveromyces lactis (strain ATCC 8585 / CBS 2359 / DSM 70799 / NBRC 1267 / NRRL Y-1140 / WM37) (Yeast).